We begin with the raw amino-acid sequence, 1245 residues long: Structural polyprotein (1245 aa).

Residues 1–106 (MNRGFFNMLG…KPKPGKRQRM (106 aa)) are disordered. Residues 37 to 70 (GLASQIQQLTTAVSALVIGQATRPQPPRPRPPPR) are host transcription inhibition. Residues 38–49 (LASQIQQLTTAV) show a composition bias toward polar residues. The short motif at 63 to 100 (PRPRPPPRQKKQAPKQPPKPKKPKTQEKKKKQPAKPKP) is the Nuclear localization signal element. The segment covering 67-106 (PPPRQKKQAPKQPPKPKKPKTQEKKKKQPAKPKPGKRQRM) has biased composition (basic residues). Residues 86–115 (KTQEKKKKQPAKPKPGKRQRMALKLEADRL) form a binding to the viral RNA region. A ribosome-binding region spans residues 100 to 114 (PGKRQRMALKLEADR). Residues 114–264 (RLFDVKNEDG…KTTPEGTEEW (151 aa)) enclose the Peptidase S3 domain. Histidine 141 functions as the Charge relay system in the catalytic mechanism. A Nuclear export signal motif is present at residues 146-156 (IDHPVLSKLKF). The tract at residues 157 to 162 (TKSSAY) is interaction with spike glycoprotein E2. Catalysis depends on aspartate 163, which acts as the Charge relay system. Residues 185–195 (PEGFYNWHHGA) are dimerization of the capsid protein. The active-site Charge relay system is serine 215. The segment at 221 to 225 (DNSGR) is dimerization of the capsid protein. An interaction with spike glycoprotein E2 region spans residues 249 to 253 (SKGKT). Positions 265–279 (SAAPLVTAMCLLGNV) are functions as an uncleaved signal peptide for the precursor of protein E3/E2. N-linked (GlcNAc...) asparagine; by host glycosylation is present at asparagine 278. 4 disulfides stabilise this stretch: cysteine 283/cysteine 289, cysteine 480/cysteine 594, cysteine 529/cysteine 554, and cysteine 531/cysteine 548. At 329–690 (SVIDDFTLTS…HEIVQHYYHR (362 aa)) the chain is on the extracellular side. N-linked (GlcNAc...) asparagine; by host glycosylation is present at asparagine 524. The N-linked (GlcNAc...) asparagine; by host glycan is linked to asparagine 646. The stretch at 682–730 (EIVQHYYHRHPVYTILAVASATVAMMIGVTVAVLCACKARRECLTPYAL) forms a coiled coil. Residues 691 to 718 (HPVYTILAVASATVAMMIGVTVAVLCAC) traverse the membrane as a helical segment. The segment at 719–723 (KARRE) is interaction with the capsid protein. The Cytoplasmic segment spans residues 719–751 (KARRECLTPYALAPNAVIPTSLALLCCVRSANA). S-palmitoyl cysteine; by host attachment occurs at residues cysteine 724, cysteine 744, and cysteine 745. Cysteine 724 and cysteine 745 are oxidised to a cystine. The Extracellular portion of the chain corresponds to 752 to 763 (ETFTETMSYLWS). Residues 764–784 (NSQPFFWVQLCIPLAAFIVLM) form a helical membrane-spanning segment. Position 785 (arginine 785) is a topological domain, cytoplasmic. A helical membrane pass occupies residues 786 to 806 (CCSCCLPFLVVAGAYLAKVDA). Residues 807–1214 (YEHATTVPNV…QAAISKTSWS (408 aa)) lie on the Extracellular side of the membrane. 4 cysteine pairs are disulfide-bonded: cysteine 855–cysteine 920, cysteine 868–cysteine 900, cysteine 869–cysteine 902, and cysteine 874–cysteine 884. The tract at residues 890 to 907 (VYPFMWGGAQCFCDSENS) is E1 fusion peptide loop. Residues asparagine 945 and asparagine 1051 are each glycosylated (N-linked (GlcNAc...) asparagine; by host). 4 disulfide bridges follow: cysteine 1065-cysteine 1077, cysteine 1107-cysteine 1182, cysteine 1112-cysteine 1186, and cysteine 1134-cysteine 1176. Positions 1196 to 1245 (TPHKNDQEFQAAISKTSWSWLFALFGGASSLLIIGLMIFACSMMLTSTRR) form a coiled coil. Residues 1215-1239 (WLFALFGGASSLLIIGLMIFACSMM) traverse the membrane as a helical segment. Over 1240–1245 (LTSTRR) the chain is Cytoplasmic.

Belongs to the alphavirus structural polyprotein family. As to quaternary structure, homomultimer. Interacts with host karyopherin KPNA4; this interaction allows the nuclear import of the viral capsid protein. Interacts with spike glycoprotein E2. Interacts with host IRAK1; the interaction leads to inhibition of IRAK1-dependent signaling. The precursor of protein E3/E2 and E1 form a heterodimer shortly after synthesis. In terms of assembly, the precursor of protein E3/E2 and E1 form a heterodimer shortly after synthesis. Processing of the precursor of protein E3/E2 into E2 and E3 results in a heterodimer of the spike glycoproteins E2 and E1. Spike at virion surface are constituted of a trimer of E2-E1 heterodimers. After target cell attachment and endocytosis, E1 change conformation to form homotrimers. E2-E1 heterodimers interact with host VLDLR or LRP8/APOER2 to mediate viral entry. Interacts with 6K protein. As to quaternary structure, interacts with spike glycoprotein E1. Processing of the precursor of protein E3/E2 into E2 and E3 results in a heterodimer of the spike glycoproteins E2 and E1. Spike at virion surface are constituted of a trimer of E2-E1 heterodimers. E2-E1 heterodimers interact with host VLDLR or LRP8/APOER2 to mediate viral entry. Interacts with 6K protein. Interacts with the capsid protein. Oligomer. Interacts with spike glycoprotein E1. Interacts with spike glycoprotein E2. Post-translationally, specific enzymatic cleavages in vivo yield mature proteins. Capsid protein is auto-cleaved during polyprotein translation, unmasking a signal peptide at the N-terminus of the precursor of E3/E2. The remaining polyprotein is then targeted to the host endoplasmic reticulum, where host signal peptidase cleaves it into pE2, 6K and E1 proteins. pE2 is further processed to mature E3 and E2 by host furin in trans-Golgi vesicle. Palmitoylated via thioester bonds. These palmitoylations may induce disruption of the C-terminus transmembrane. This would result in the reorientation of E2 C-terminus from lumenal to cytoplasmic side. In terms of processing, N-glycosylated. Post-translationally, palmitoylated via thioester bonds.

The protein localises to the virion. Its subcellular location is the host cytoplasm. It is found in the host cell membrane. The protein resides in the host nucleus. It localises to the virion membrane. The protein localises to the host Golgi apparatus. Its subcellular location is the host trans-Golgi network. It is found in the host endoplasmic reticulum. It carries out the reaction Autocatalytic release of the core protein from the N-terminus of the togavirus structural polyprotein by hydrolysis of a -Trp-|-Ser- bond.. Its activity is regulated as follows. The channel activity is blocked by 5-N, N-Hexamethylene amiloride. Forms an icosahedral capsid with a T=4 symmetry composed of 240 copies of the capsid protein surrounded by a lipid membrane through which penetrate 80 spikes composed of trimers of E1-E2 heterodimers. The capsid protein binds to the viral RNA genome at a site adjacent to a ribosome binding site for viral genome translation following genome release. Possesses a protease activity that results in its autocatalytic cleavage from the nascent structural protein. Following its self-cleavage, the capsid protein transiently associates with ribosomes, and within several minutes the protein binds to viral RNA and rapidly assembles into icosahedric core particles. The resulting nucleocapsid eventually associates with the cytoplasmic domain of the spike glycoprotein E2 at the cell membrane, leading to budding and formation of mature virions. In case of infection, new virions attach to target cells and after clathrin-mediated endocytosis their membrane fuses with the host endosomal membrane. This leads to the release of the nucleocapsid into the cytoplasm, followed by an uncoating event necessary for the genomic RNA to become accessible. The uncoating might be triggered by the interaction of capsid proteins with ribosomes. Binding of ribosomes would release the genomic RNA since the same region is genomic RNA-binding and ribosome-binding. Specifically inhibits interleukin-1 receptor-associated kinase 1/IRAK1-dependent signaling during viral entry, representing a means by which the alphaviruses may evade innate immune detection and activation prior to viral gene expression. Its function is as follows. Provides the signal sequence for the translocation of the precursor of protein E3/E2 to the host endoplasmic reticulum. Furin-cleaved E3 remains associated with spike glycoprotein E1 and mediates pH protection of the latter during the transport via the secretory pathway. After virion release from the host cell, the assembly protein E3 is gradually released in the extracellular space. In terms of biological role, plays a role in viral attachment to target host cell, by binding to the cell receptors VLDLR or LRP8/APOER2. Synthesized as a pE2 precursor which is processed by furin at the cell membrane just before virion budding, giving rise to E2-E1 heterodimer. The pE2-E1 heterodimer is stable, whereas E2-E1 is unstable and dissociate at low pH. pE2 is processed at the last step, presumably to avoid E1 fusion activation before its final export to cell surface. E2 C-terminus contains a transitory transmembrane that would be disrupted by palmitoylation, resulting in reorientation of the C-terminal tail from lumenal to cytoplasmic side. This step is critical since E2 C-terminus is involved in budding by interacting with capsid proteins. This release of E2 C-terminus in cytoplasm occurs lately in protein export, and precludes premature assembly of particles at the endoplasmic reticulum membrane. Functionally, acts as a viroporin that participates in virus glycoprotein processing and transport to the plasma membrane, cell permeabilization and budding of viral particles. Disrupts the calcium homeostasis of the cell, probably at the endoplasmic reticulum level resulting in the increased levels of cytoplasmic calcium. Because of its lipophilic properties, the 6K protein is postulated to influence the selection of lipids that interact with the transmembrane domains of the glycoproteins, which, in turn, affects the deformability of the bilayer required for the extreme curvature that occurs as budding proceeds. Present in low amount in virions, about 3% compared to viral glycoproteins. Class II viral fusion protein. Fusion activity is inactive as long as E1 is bound to E2 in mature virion. After virus attachment to target cell via host VLDLR or LRP8/APOER2 and endocytosis, acidification of the endosome induces dissociation of E1/E2 heterodimer and concomitant trimerization of the E1 subunits. This E1 trimer is fusion active, and promotes release of viral nucleocapsid in cytoplasm after endosome and viral membrane fusion. Efficient fusion requires the presence of cholesterol and sphingolipid in the target membrane. The protein is Structural polyprotein of Acrocephalus scirpaceus (Eurasian reed-warbler).